A 194-amino-acid chain; its full sequence is Peptidyl-tRNA hydrolase (194 aa).

Y21 contributes to the tRNA binding site. Residue H26 is the Proton acceptor of the active site. Residues Y72, N74, and N120 each contribute to the tRNA site.

This sequence belongs to the PTH family. As to quaternary structure, monomer.

The protein resides in the cytoplasm. The enzyme catalyses an N-acyl-L-alpha-aminoacyl-tRNA + H2O = an N-acyl-L-amino acid + a tRNA + H(+). Hydrolyzes ribosome-free peptidyl-tRNAs (with 1 or more amino acids incorporated), which drop off the ribosome during protein synthesis, or as a result of ribosome stalling. Functionally, catalyzes the release of premature peptidyl moieties from peptidyl-tRNA molecules trapped in stalled 50S ribosomal subunits, and thus maintains levels of free tRNAs and 50S ribosomes. This chain is Peptidyl-tRNA hydrolase, found in Halorhodospira halophila (strain DSM 244 / SL1) (Ectothiorhodospira halophila (strain DSM 244 / SL1)).